We begin with the raw amino-acid sequence, 848 residues long: MNSSSANITYASRKRRKPVQKTVKPIPAEGIKSNPSKRHRDRLNTELDRLASLLPFPQDVINKLDKLSVLRLSVSYLRAKSFFDVALKSSPTERNGGQDNCRAANFREGLNLQEGEFLLQALNGFVLVVTTDALVFYASSTIQDYLGFQQSDVIHQSVYELIHTEDRAEFQRQLHWALNPSQCTESGQGIEEATGLPQTVVCYNPDQIPPENSPLMERCFICRLRCLLDNSSGFLAMNFQGKLKYLHGQKKKGKDGSILPPQLALFAIATPLQPPSILEIRTKNFIFRTKHKLDFTPIGCDAKGRIVLGYTEAELCTRGSGYQFIHAADMLYCAESHIRMIKTGESGMIVFRLLTKNNRWTWVQSNARLLYKNGRPDYIIVTQRPLTDEEGTEHLRKRNTKLPFMFTTGEAVLYEATNPFPAIMDPLPLRTKNGTSGKDSATTSTLSKDSLNPSSLLAAMMQQDESIYLYPASSTSSTAPFENNFFNESMNECRNWQDNTAPMGNDTILKHEQIDQPQDVNSFAGGHPGLFQDSKNSDLYSIMKNLGIDFEDIRHMQNEKFFRNDFSGEVDFRDIDLTDEILTYVQDSLSKSPFIPSDYQQQQSLALNSSCMVQEHLHLEQQQQHHQKQVVVEPQQQLCQKMKHMQVNGMFENWNSNQFVPFNCPQQDPQQYNVFTDLHGISQEFPYKSEMDSMPYTQNFISCNQPVLPQHSKCTELDYPMGSFEPSPYPTTSSLEDFVTCLQLPENQKHGLNPQSAIITPQTCYAGAVSMYQCQPEPQHTHVGQMQYNPVLPGQQAFLNKFQNGVLNETYPAELNNINNTQTTTHLQPLHHPSEARPFPDLTSSGFL.

M1 is subject to N-acetylmethionine. The propeptide occupies 1 to 10; it reads MNSSSANITY. A compositionally biased stretch (polar residues) spans 1-10; sequence MNSSSANITY. The interval 1 to 39 is disordered; the sequence is MNSSSANITYASRKRRKPVQKTVKPIPAEGIKSNPSKRH. 2 consecutive short sequence motifs (nuclear localization signal) follow at residues 13-16 and 37-42; these read RKRR and KRHRDR. The 54-residue stretch at 27–80 folds into the bHLH domain; sequence PAEGIKSNPSKRHRDRLNTELDRLASLLPFPQDVINKLDKLSVLRLSVSYLRAK. Positions 38–66 are DNA-binding; sequence RHRDRLNTELDRLASLLPFPQDVINKLDK. Required for maintaining the overall integrity of the AHR:ARNT heterodimer and its transcriptional activity regions lie at residues 50–82, 118–126, and 266–268; these read LASL…AKSF, LLQALNGFV, and FAI. Positions 64–72 match the Nuclear export signal motif; the sequence is LDKLSVLRL. The 71-residue stretch at 111–181 folds into the PAS 1 domain; it reads NLQEGEFLLQ…RQLHWALNPS (71 aa). The region spanning 275 to 342 is the PAS 2 domain; that stretch reads PSILEIRTKN…CAESHIRMIK (68 aa). Residues 348–386 form the PAC domain; sequence MIVFRLLTKNNRWTWVQSNARLLYKNGRPDYIIVTQRPL. The tract at residues 824–848 is disordered; the sequence is TTHLQPLHHPSEARPFPDLTSSGFL.

Homodimer. Heterodimer; efficient DNA binding requires dimerization with another bHLH protein. Interacts with ARNT; the heterodimer ARNT:AHR binds to core DNA sequence 5'-TGCGTG-3' within the dioxin response element (DRE) of target gene promoters and activates their transcription. Binds MYBBP1A. Interacts with coactivators including SRC-1, RIP140 and NOCA7, and with the corepressor SMRT. Interacts with NEDD8 and IVNS1ABP. Interacts with BMAL1. Interacts with HSP90AB1. Interacts with TIPARP; leading to mono-ADP-ribosylation of AHR and subsequent inhibition of AHR. Mono-ADP-ribosylated, leading to inhibit transcription activator activity of AHR. As to expression, expressed in all tissues tested including blood, brain, heart, kidney, liver, lung, pancreas and skeletal muscle. Expressed in retinal photoreceptors.

It localises to the cytoplasm. Its subcellular location is the nucleus. Functionally, ligand-activated transcription factor that enables cells to adapt to changing conditions by sensing compounds from the environment, diet, microbiome and cellular metabolism, and which plays important roles in development, immunity and cancer. Upon ligand binding, translocates into the nucleus, where it heterodimerizes with ARNT and induces transcription by binding to xenobiotic response elements (XRE). Regulates a variety of biological processes, including angiogenesis, hematopoiesis, drug and lipid metabolism, cell motility and immune modulation. Xenobiotics can act as ligands: upon xenobiotic-binding, activates the expression of multiple phase I and II xenobiotic chemical metabolizing enzyme genes (such as the CYP1A1 gene). Mediates biochemical and toxic effects of halogenated aromatic hydrocarbons. Next to xenobiotics, natural ligands derived from plants, microbiota, and endogenous metabolism are potent AHR agonists. Tryptophan (Trp) derivatives constitute an important class of endogenous AHR ligands. Acts as a negative regulator of anti-tumor immunity: indoles and kynurenic acid generated by Trp catabolism act as ligand and activate AHR, thereby promoting AHR-driven cancer cell motility and suppressing adaptive immunity. Regulates the circadian clock by inhibiting the basal and circadian expression of the core circadian component PER1. Inhibits PER1 by repressing the CLOCK-BMAL1 heterodimer mediated transcriptional activation of PER1. The heterodimer ARNT:AHR binds to core DNA sequence 5'-TGCGTG-3' within the dioxin response element (DRE) of target gene promoters and activates their transcription. In Homo sapiens (Human), this protein is Aryl hydrocarbon receptor.